We begin with the raw amino-acid sequence, 338 residues long: Heat-inducible transcription repressor HrcA (338 aa).

Belongs to the HrcA family.

Negative regulator of class I heat shock genes (grpE-dnaK-dnaJ and groELS operons). Prevents heat-shock induction of these operons. This Streptomyces avermitilis (strain ATCC 31267 / DSM 46492 / JCM 5070 / NBRC 14893 / NCIMB 12804 / NRRL 8165 / MA-4680) protein is Heat-inducible transcription repressor HrcA.